A 222-amino-acid chain; its full sequence is MSGGTTKAAENAKADLPRLMKALRDQGVTDPQVLKAIETTPRDLFTPDLFKDRSWEDSALPIACGQTISQPYIVGLMTQALTVEPRSRVLEIGTGSGYQTTILSKVSRLVYTIERYRTLMKEAEARFNTLGLTNVITKFGDGGEGWAEQAPFDRIMVTAAAEDDPKRLLSQLKPNGVLVAPVGKGPVQSLRRYAGDGKGGFRVEILCDVRFVPLLAGVAKDQ.

Ser69 is an active-site residue.

It belongs to the methyltransferase superfamily. L-isoaspartyl/D-aspartyl protein methyltransferase family.

Its subcellular location is the cytoplasm. It catalyses the reaction [protein]-L-isoaspartate + S-adenosyl-L-methionine = [protein]-L-isoaspartate alpha-methyl ester + S-adenosyl-L-homocysteine. In terms of biological role, catalyzes the methyl esterification of L-isoaspartyl residues in peptides and proteins that result from spontaneous decomposition of normal L-aspartyl and L-asparaginyl residues. It plays a role in the repair and/or degradation of damaged proteins. This Caulobacter vibrioides (strain NA1000 / CB15N) (Caulobacter crescentus) protein is Protein-L-isoaspartate O-methyltransferase.